The sequence spans 405 residues: L-carnitine CoA-transferase (405 aa).

Residues lysine 97 and arginine 104 each coordinate CoA. Aspartate 169 acts as the Nucleophile in catalysis.

Belongs to the CoA-transferase III family. CaiB subfamily. As to quaternary structure, homodimer.

The protein resides in the cytoplasm. The enzyme catalyses crotonobetainyl-CoA + (R)-carnitine = crotonobetaine + (R)-carnitinyl-CoA. The catalysed reaction is 4-(trimethylamino)butanoyl-CoA + (R)-carnitine = (R)-carnitinyl-CoA + 4-(trimethylamino)butanoate. It participates in amine and polyamine metabolism; carnitine metabolism. Its function is as follows. Catalyzes the reversible transfer of the CoA moiety from gamma-butyrobetainyl-CoA to L-carnitine to generate L-carnitinyl-CoA and gamma-butyrobetaine. Is also able to catalyze the reversible transfer of the CoA moiety from gamma-butyrobetainyl-CoA or L-carnitinyl-CoA to crotonobetaine to generate crotonobetainyl-CoA. In Escherichia coli O7:K1 (strain IAI39 / ExPEC), this protein is L-carnitine CoA-transferase.